The chain runs to 123 residues: NADH-quinone oxidoreductase subunit A (123 aa).

A run of 3 helical transmembrane segments spans residues 11–31 (YLPI…IMIL), 68–88 (LVAI…PWAI), and 93–113 (IGKM…IGFI).

Belongs to the complex I subunit 3 family. As to quaternary structure, NDH-1 is composed of 14 different subunits. Subunits NuoA, H, J, K, L, M, N constitute the membrane sector of the complex.

Its subcellular location is the cell inner membrane. It catalyses the reaction a quinone + NADH + 5 H(+)(in) = a quinol + NAD(+) + 4 H(+)(out). In terms of biological role, NDH-1 shuttles electrons from NADH, via FMN and iron-sulfur (Fe-S) centers, to quinones in the respiratory chain. The immediate electron acceptor for the enzyme in this species is believed to be ubiquinone. Couples the redox reaction to proton translocation (for every two electrons transferred, four hydrogen ions are translocated across the cytoplasmic membrane), and thus conserves the redox energy in a proton gradient. This Rickettsia prowazekii (strain Madrid E) protein is NADH-quinone oxidoreductase subunit A.